We begin with the raw amino-acid sequence, 266 residues long: MKDIKVIIAGPRGRMGHEAVLLMERTPHFQFVAAVDYKHGGEKISDLPGMPALDVPIYEDLHTCLDEIEADVLLDLTTPEVGKKHVTLAVEHGLRSVIGTTGFTEEELQHLTNIAKEKEVGTIIAPNFAIGAVLMMKFSQMAAKYFQDVEIIELHHDQKLDAPSGTAVKTVDLIRQHREPKQQGHPNETEQLKGVRGANVDGIHIHSVRLPGLIAHQEVLFGGDGQMLTVRHDSFNRASFMSGVKLSIETVMNLDHLVYGLENIMD.

Position 10–15 (10–15 (GPRGRM)) interacts with NAD(+). Lysine 38 is a binding site for NADP(+). Residues 99–101 (GTT) and 125–128 (APNF) each bind NAD(+). Histidine 155 (proton donor/acceptor) is an active-site residue. Residue histidine 156 participates in (S)-2,3,4,5-tetrahydrodipicolinate binding. Catalysis depends on lysine 159, which acts as the Proton donor. A (S)-2,3,4,5-tetrahydrodipicolinate-binding site is contributed by 165-166 (GT).

This sequence belongs to the DapB family.

Its subcellular location is the cytoplasm. It carries out the reaction (S)-2,3,4,5-tetrahydrodipicolinate + NAD(+) + H2O = (2S,4S)-4-hydroxy-2,3,4,5-tetrahydrodipicolinate + NADH + H(+). It catalyses the reaction (S)-2,3,4,5-tetrahydrodipicolinate + NADP(+) + H2O = (2S,4S)-4-hydroxy-2,3,4,5-tetrahydrodipicolinate + NADPH + H(+). It functions in the pathway amino-acid biosynthesis; L-lysine biosynthesis via DAP pathway; (S)-tetrahydrodipicolinate from L-aspartate: step 4/4. Functionally, catalyzes the conversion of 4-hydroxy-tetrahydrodipicolinate (HTPA) to tetrahydrodipicolinate. This is 4-hydroxy-tetrahydrodipicolinate reductase from Bacillus cytotoxicus (strain DSM 22905 / CIP 110041 / 391-98 / NVH 391-98).